We begin with the raw amino-acid sequence, 225 residues long: MTQDELKQAVAKAAVDHIAPHLEPSSIVGVGTGSTANFFIDYLAEYRNDFDGAVASSEATAERLKKHGIPVYDLNAVNEIEFYVDGADETNESLELIKGGGGALTREKIVAAVAKTFICIADESKQVGILGEFPLPVEVIPMARSHVGREIVKLGGDPVYRDGFVTDNGNIIIDIHNMDISRPLVVEEKLNNIVGVVTNGLFARRPADLLLLGTRDGVKSIARGA.

Residues 32 to 35, 85 to 88, and 98 to 101 each bind substrate; these read TGST, DGAD, and KGGG. Glu-107 acts as the Proton acceptor in catalysis. Lys-125 lines the substrate pocket.

This sequence belongs to the ribose 5-phosphate isomerase family. Homodimer.

It catalyses the reaction aldehydo-D-ribose 5-phosphate = D-ribulose 5-phosphate. It functions in the pathway carbohydrate degradation; pentose phosphate pathway; D-ribose 5-phosphate from D-ribulose 5-phosphate (non-oxidative stage): step 1/1. Its function is as follows. Catalyzes the reversible conversion of ribose-5-phosphate to ribulose 5-phosphate. The sequence is that of Ribose-5-phosphate isomerase A from Marinobacter nauticus (strain ATCC 700491 / DSM 11845 / VT8) (Marinobacter aquaeolei).